The following is a 348-amino-acid chain: L-threonine 3-dehydrogenase (348 aa).

Position 42 (C42) interacts with Zn(2+). Active-site charge relay system residues include T44 and H47. Residues H67, E68, C97, C100, C103, and C111 each contribute to the Zn(2+) site. NAD(+)-binding positions include L179, E199, R204, 266 to 268, and 291 to 292; these read LGL and IT.

This sequence belongs to the zinc-containing alcohol dehydrogenase family. As to quaternary structure, homotetramer. Requires Zn(2+) as cofactor.

The protein resides in the cytoplasm. The catalysed reaction is L-threonine + NAD(+) = (2S)-2-amino-3-oxobutanoate + NADH + H(+). It participates in amino-acid degradation; L-threonine degradation via oxydo-reductase pathway; glycine from L-threonine: step 1/2. Functionally, catalyzes the NAD(+)-dependent oxidation of L-threonine to 2-amino-3-ketobutyrate. To a lesser extent, also catalyzes the oxidation of L-serine, D-threonine, butan-2,3-diol, butan-1,2-diol, and propan-1,2-diol and cannot oxidize other L-amino acids. Cannot utilize NADP(H) instead of NAD(H). The polypeptide is L-threonine 3-dehydrogenase (Pyrococcus furiosus (strain ATCC 43587 / DSM 3638 / JCM 8422 / Vc1)).